We begin with the raw amino-acid sequence, 468 residues long: Factor XIIa inhibitor (468 aa).

Positions 1-23 are cleaved as a signal peptide; it reads MASRLTPLTLLLLLLLAGDRVTS. The disordered stretch occupies residues 27–60; the sequence is VGPGNLQEGESEGDSQKGGILDGESIQGNEDSPT. N-linked (GlcNAc...) asparagine glycans are attached at residues N65, N176, N227, and N326. Intrachain disulfides connect C97–C396 and C104–C179.

It belongs to the serpin family. In terms of processing, N- and O-glycosylated.

The protein resides in the secreted. Functionally, may play a potentially crucial role in regulating important physiological pathways including complement activation, blood coagulation, fibrinolysis and the generation of kinins. The sequence is that of Factor XIIa inhibitor from Bos taurus (Bovine).